We begin with the raw amino-acid sequence, 215 residues long: Beta-crystallin A3 (215 aa).

N-acetylmethionine is present on Met-1. Low complexity predominate over residues 1-16 (METQAEQQELETLPTT). The segment at 1 to 29 (METQAEQQELETLPTTKMAQTNPTPGSLG) is disordered. Positions 1–30 (METQAEQQELETLPTTKMAQTNPTPGSLGP) are N-terminal arm. Glu-2 is subject to N-acetylalanine. Beta/gamma crystallin 'Greek key' domains follow at residues 31-70 (WKIT…KVES) and 71-117 (GAWI…RPIC). 2 positions are modified to S-glutathionyl cysteine; alternate: Cys-82 and Cys-117. Cys-82 and Cys-117 each carry S-methylcysteine; alternate. A connecting peptide region spans residues 118 to 123 (SANHKE). Beta/gamma crystallin 'Greek key' domains follow at residues 124-165 (SKMT…KIQS) and 166-214 (GAWV…RRIQ). S-methylcysteine is present on Cys-185.

It belongs to the beta/gamma-crystallin family. In terms of assembly, homo/heterodimer, or complexes of higher-order. The structure of beta-crystallin oligomers seems to be stabilized through interactions between the N-terminal arms. Interacts with CRYBA1. Post-translationally, specific cleavages in the N-terminal arm occur during lens maturation and give rise to several truncated forms. Cleavages do not seem to have adverse effects on solubility. S-methylation and glutathionylation occur in normal young lenses and do not seem to be detrimental.

Functionally, crystallins are the dominant structural components of the vertebrate eye lens. The sequence is that of Beta-crystallin A3 from Homo sapiens (Human).